We begin with the raw amino-acid sequence, 341 residues long: Phosphate acyltransferase (341 aa).

Belongs to the PlsX family. In terms of assembly, homodimer. Probably interacts with PlsY.

It localises to the cytoplasm. The catalysed reaction is a fatty acyl-[ACP] + phosphate = an acyl phosphate + holo-[ACP]. It functions in the pathway lipid metabolism; phospholipid metabolism. Its function is as follows. Catalyzes the reversible formation of acyl-phosphate (acyl-PO(4)) from acyl-[acyl-carrier-protein] (acyl-ACP). This enzyme utilizes acyl-ACP as fatty acyl donor, but not acyl-CoA. In Saccharophagus degradans (strain 2-40 / ATCC 43961 / DSM 17024), this protein is Phosphate acyltransferase.